A 1009-amino-acid chain; its full sequence is Protein translocase subunit SecA (1009 aa).

Residues Q86, 104–108, and D497 each bind ATP; that span reads GEGKT. 2 disordered regions span residues 869–894 and 949–1009; these read AVPQ…GQQP and ERRP…RNAG. Composition is skewed to low complexity over residues 883-894 and 953-973; these read PVPAATAPGQQP and SGAA…AGAG. Zn(2+)-binding residues include C990, C992, C1001, and H1002.

This sequence belongs to the SecA family. Monomer and homodimer. Part of the essential Sec protein translocation apparatus which comprises SecA, SecYEG and auxiliary proteins SecDF. Other proteins may also be involved. Zn(2+) is required as a cofactor.

It localises to the cell membrane. The protein localises to the cytoplasm. It carries out the reaction ATP + H2O + cellular proteinSide 1 = ADP + phosphate + cellular proteinSide 2.. Its function is as follows. Part of the Sec protein translocase complex. Interacts with the SecYEG preprotein conducting channel. Has a central role in coupling the hydrolysis of ATP to the transfer of proteins into and across the cell membrane, serving as an ATP-driven molecular motor driving the stepwise translocation of polypeptide chains across the membrane. The polypeptide is Protein translocase subunit SecA (Acidothermus cellulolyticus (strain ATCC 43068 / DSM 8971 / 11B)).